A 270-amino-acid polypeptide reads, in one-letter code: Glutamate 5-kinase (270 aa).

ATP is bound at residue lysine 15. 3 residues coordinate substrate: serine 55, aspartate 142, and asparagine 158. Residues 178 to 179 (SD) and 220 to 226 (TGGMLSK) each bind ATP.

It belongs to the glutamate 5-kinase family.

The protein localises to the cytoplasm. It catalyses the reaction L-glutamate + ATP = L-glutamyl 5-phosphate + ADP. It participates in amino-acid biosynthesis; L-proline biosynthesis; L-glutamate 5-semialdehyde from L-glutamate: step 1/2. Catalyzes the transfer of a phosphate group to glutamate to form L-glutamate 5-phosphate. The chain is Glutamate 5-kinase from Streptococcus uberis (strain ATCC BAA-854 / 0140J).